Reading from the N-terminus, the 550-residue chain is Mitochondrial distribution and morphology protein 12 (550 aa).

The SMP-LTD domain occupies 1–550 (MSIELNWETL…VYPSFWTFLV (550 aa)). Disordered stretches follow at residues 62–168 (ITDP…PQDL), 218–356 (PPQW…TKYR), and 474–493 (TLAS…GGNT). Acidic residues predominate over residues 69–90 (FYEEDPDVDYDDEDEDVEETHD). Residues 125–140 (VASSSSSSVGRGSAPR) are compositionally biased toward low complexity. Composition is skewed to polar residues over residues 148 to 157 (PTKSNININT), 251 to 269 (PSHS…QTAS), 278 to 289 (TPTSFLRSGQQT), and 296 to 323 (VSTL…TAQE).

This sequence belongs to the MDM12 family. As to quaternary structure, component of the ER-mitochondria encounter structure (ERMES) or MDM complex, composed of MMM1, MDM10, MDM12 and MDM34. An MMM1 homodimer associates with one molecule of MDM12 on each side in a pairwise head-to-tail manner, and the SMP-LTD domains of MMM1 and MDM12 generate a continuous hydrophobic tunnel for phospholipid trafficking.

It localises to the mitochondrion outer membrane. The protein resides in the endoplasmic reticulum membrane. In terms of biological role, component of the ERMES/MDM complex, which serves as a molecular tether to connect the endoplasmic reticulum (ER) and mitochondria. Components of this complex are involved in the control of mitochondrial shape and protein biogenesis, and function in nonvesicular lipid trafficking between the ER and mitochondria. MDM12 is required for the interaction of the ER-resident membrane protein MMM1 and the outer mitochondrial membrane-resident beta-barrel protein MDM10. The MDM12-MMM1 subcomplex functions in the major beta-barrel assembly pathway that is responsible for biogenesis of all mitochondrial outer membrane beta-barrel proteins, and acts in a late step after the SAM complex. The MDM10-MDM12-MMM1 subcomplex further acts in the TOM40-specific pathway after the action of the MDM12-MMM1 complex. Essential for establishing and maintaining the structure of mitochondria and maintenance of mtDNA nucleoids. In Pyricularia oryzae (strain 70-15 / ATCC MYA-4617 / FGSC 8958) (Rice blast fungus), this protein is Mitochondrial distribution and morphology protein 12.